We begin with the raw amino-acid sequence, 370 residues long: 2-aminoethylphosphonate--pyruvate transaminase (370 aa).

Lysine 194 is subject to N6-(pyridoxal phosphate)lysine.

Belongs to the class-V pyridoxal-phosphate-dependent aminotransferase family. PhnW subfamily. In terms of assembly, homodimer. Requires pyridoxal 5'-phosphate as cofactor.

The enzyme catalyses (2-aminoethyl)phosphonate + pyruvate = phosphonoacetaldehyde + L-alanine. Involved in phosphonate degradation. The chain is 2-aminoethylphosphonate--pyruvate transaminase from Paraburkholderia phymatum (strain DSM 17167 / CIP 108236 / LMG 21445 / STM815) (Burkholderia phymatum).